Reading from the N-terminus, the 25-residue chain is Ribosome-inactivating protein charantin (25 aa).

As to quaternary structure, monomer.

The catalysed reaction is Endohydrolysis of the N-glycosidic bond at one specific adenosine on the 28S rRNA.. Functionally, inhibits cell-free translation in a rabbit reticulocyte lysate system. The sequence is that of Ribosome-inactivating protein charantin from Momordica charantia (Bitter gourd).